Here is a 1060-residue protein sequence, read N- to C-terminus: MLIEDVDALKSWLAKLLEPICDADPSALANYVVALVKKDKPEKELKAFCADQLDVFLQKETSGFVDKLFESLYTKNYLPLLEPVKPEPKPLVQEKEEIKEEVFQEPAEEERDGRKKKYPSPQKTRSESSERRTREKKREDGKWRDYDRYYERNELYREKYDWRRGRSKSRSKSRGLSRSRSRSRGRSKDRDPNRNVEHRERSKFKSERNDLESSYVPVSAPPPNSSEQYSSGAQSIPSTVTVIAPAHHSENTTESWSNYYNNHSSSNSFGRNLPPKRRCRDYDERGFCVLGDLCQFDHGNDPLVVDEVALPSMIPFPPPPPGLPPPPPPGMLMPPMPGPGPGPGPGPGPGPGPGPGPGHSMRLPVPQGHGQPPPSVVLPIPRPPITQSSLINSRDQPGTSAVPNLASVGTRLPPPLPQNLLYTVSERQPMYSREHGAAASERLQLGTPPPLLAARLVPPRNLMGSSIGYHTSVSSPTPLVPDTYEPDGYNPEAPSITSSGRSQYRQFFSRTQTQRPNLIGLTSGDMDVNPRAANIVIQTEPPVPVSINSNITRVVLEPDSRKRAMSGLEGPLTKKPWLGKQGNNNQNKPGFLRKNQYTNTKLEVKKIPQELNNITKLNEHFSKFGTIVNIQVAFKGDPEAALIQYLTNEEARKAISSTEAVLNNRFIRVLWHRENNEQPTLQSSAQLLLQQQQTLSHLSQQHHHLPQHLHQQQVLVAQSAPSTVHGGIQKMMSKPQTSGAYVLNKVPVKHRLGHAGGNQSDASHLLNQSGGAGEDCQIFSTPGHPKMIYSSSNLKTPSKLCSGSKSHDVQEVLKKKQEAMKLQQDMRKKRQEVLEKQIECQKMLISKLEKNKNMKPEERANIMKTLKELGEKISQLKDELKTSSAVSTPSKVKTKTEAQKELLDTELDLHKRLSSGEDTTELRKKLSQLQVEAARLGILPVGRGKTMSSQGRGRGRGRGGRGRGSLNHMVVDHRPKALTVGGFIEEEKEDLLQHFSTANQGPKFKDRRLQISWHKPKVPSISTETEEEEVKEEETETSDLFLPDDDDEDEDEYESRSWRR.

Composition is skewed to basic and acidic residues over residues Leu-91 to Val-102 and Thr-124 to Trp-143. Disordered regions lie at residues Leu-91–Trp-143 and Trp-162–Ser-235. Basic residues predominate over residues Gly-165 to Gly-185. A compositionally biased stretch (basic and acidic residues) spans Arg-186–Leu-211. Residues Ser-225 to Ser-235 are compositionally biased toward polar residues. Residues Leu-273–Asp-301 form a C3H1-type zinc finger. Composition is skewed to pro residues over residues Pro-319–Gly-356 and Gln-371–Pro-384. Residues Pro-319–Leu-412 are disordered. Positions Thr-386–Val-402 are enriched in polar residues. Thr-447 carries the phosphothreonine modification. Arg-455 bears the Omega-N-methylarginine mark. Residues Met-565–Leu-592 form a disordered region. Residues Gly-579–Lys-588 are compositionally biased toward low complexity. The 75-residue stretch at Thr-600 to Glu-674 folds into the RRM domain. The stretch at Val-809–Val-886 forms a coiled coil. Position 927 is a phosphoserine (Ser-927). 2 disordered regions span residues Pro-940–His-968 and Asp-1006–Arg-1060. A phosphoserine mark is found at Ser-1012 and Ser-1020. Residues Glu-1024–Tyr-1053 are compositionally biased toward acidic residues.

The protein localises to the cytoplasm. It is found in the nucleus speckle. In terms of biological role, may be involved in the turnover of nuclear polyadenylated (pA+) RNA. The chain is RNA-binding protein 27 from Homo sapiens (Human).